Here is a 1363-residue protein sequence, read N- to C-terminus: MFLILLISLPTAFAVIGDLKCTTVSINDVDTGVPSISTDTVDVTKGLGTYYVLDRVYLNTTLLLNGYYPTSGSTYRNMALKGTLLLSTLWFKPPFLSDFTNGIFAKVKNTKVIKDGVMYSEFPAITIGSTFVNTSYSVVVQPHTTILGNKLQGFLEISVCQYTMCEYPNTICNPNLGNRRVELWHWDTGVVSCLYKRNFTYDVNADYLYFHFYQEGGTFYAYFTDTGVVTKFLFNVYLGTVLSHYYVMPLTCNSALTLEYWVTPLTSKQYLLAFNQDGVIFNAVDCKSDFMSEIKCKTLSIAPSTGVYELNGYTVQPIADVYRRIPNLPDCNIEAWLNDKSVPSPLNWERKTFSNCNFNMSSLMSFIQADSFTCNNIDAAKIYGMCFSSITIDKFAIPNGRKVDLQLGNLGYLQSFNYRIDTTATSCQLYYNLPAANVSVSRFNPSTWNRRFGFTEQSVFKPQPAGVFTDHDVVYAQHCFKAPTNFCPCKLDGSLCVGNGPGIDAGYKTSGIGTCPAGTNYLTCHNAAQCDCLCTPDPITSKATGPYKCPQTKYLVGIGEHCSGLAIKSDHCGGNPCTCQPQAFLGWSVDSCLQGDRCNIFANFILHDVNSGTTCSTDLQKSNTDIILGVCVNYDLYGITGQGIFVEVNATYYNSWQNLLYDSNGNLYGFRDYLTNRTFMIRSCYSGRVSAAFHANSSEPALLFRNIKCNYVFNNTLSRQLQPINYFDSYLGCVVNADNSTSSVVQTCDLTVGSGYCVDYSTKRRSRRSITTGYRFTNFEPFTVNSVNDSLEPVGGLYEIQIPSEFTIGNMEEFIQTSSPKVTIDCSAFVCGDYAACKSQLVEYGSFCDNINAILTEVNELLDTTQLQVANSLMNGVTLSTKLKDGVNFNVDDINFSPVLGCLGSDCNKVSSRSAIEDLLFSKVKLSDVGFVEAYNNCTGGAEIRDLICVQSYNGIKVLPPLLSENQISGYTLAATSASLFPPWSAAAGVPFYLNVQYRINGIGVTMDVLSQNQKLIANAFNNALGAIQEGFDATNSALVKIQAVVNANAETLNNLLQQLSNRFGAISSSLQEILSRLDALEAQAQIDRLINGRLTALNAYVSQQLSDSTLVKFSAAQAMEKVNECVKSQSSRINFCGNGNHIISLVQNAPYGLYFIHFSYVPTKYVTAKVSPGLCIAGGRGIAPKSGYFVNVNNTWMFTGSGYYYPEPITGNNVVVMSTCAVNYTKAPDVMLNISTPNLPDFKEELDQWFKNQTSVAPDLSLDYINVTFLDLQDEMNRLQEAIKVLNQSYINLKDIGTYEYYVKWPWYVWLLIGFAGVAMLVLLFFICCCTGCGTSCFKKCGGCCDDYTGHQELVIKTSHED.

Residues 1 to 13 (MFLILLISLPTAF) form the signal peptide. Over 14-1307 (AVIGDLKCTT…GTYEYYVKWP (1294 aa)) the chain is Extracellular. The BetaCoV S1-NTD domain occupies 15-298 (VIGDLKCTTV…DFMSEIKCKT (284 aa)). Cystine bridges form between Cys-21/Cys-165, Cys-160/Cys-193, Cys-172/Cys-252, Cys-286/Cys-296, and Cys-331/Cys-356. Residues Asn-59 and Asn-133 are each glycosylated (N-linked (GlcNAc...) asparagine; by host). A glycan (N-linked (GlcNAc...) asparagine; by host) is linked at Asn-198. Positions 329 to 617 (PDCNIEAWLN…DVNSGTTCST (289 aa)) constitute a BetaCoV S1-CTD domain. Residue Asn-359 is glycosylated (N-linked (GlcNAc...) asparagine; by host). 2 cysteine pairs are disulfide-bonded: Cys-374–Cys-427 and Cys-386–Cys-615. 7 N-linked (GlcNAc...) asparagine; by host glycosylation sites follow: Asn-437, Asn-649, Asn-676, Asn-696, Asn-714, Asn-739, and Asn-788. Fusion peptide regions lie at residues 914–935 (SAIE…VEAY) and 933–953 (EAYN…VQSY). The N-linked (GlcNAc...) asparagine; by host glycan is linked to Asn-937. A disulfide bridge connects residues Cys-938 and Cys-949. Residues 1014–1064 (QKLIANAFNNALGAIQEGFDATNSALVKIQAVVNANAETLNNLLQQLSNRF) form a heptad repeat 1 region. Residues 1043–1087 (QAVVNANAETLNNLLQQLSNRFGAISSSLQEILSRLDALEAQAQI) adopt a coiled-coil conformation. N-linked (GlcNAc...) asparagine; by host glycosylation is found at Asn-1194, Asn-1224, Asn-1234, Asn-1253, Asn-1267, and Asn-1288. The segment at 1258-1296 (APDLSLDYINVTFLDLQDEMNRLQEAIKVLNQSYINLKD) is heptad repeat 2. Residues 1269-1297 (TFLDLQDEMNRLQEAIKVLNQSYINLKDI) adopt a coiled-coil conformation. The chain crosses the membrane as a helical span at residues 1308-1328 (WYVWLLIGFAGVAMLVLLFFI). Residues 1329-1363 (CCCTGCGTSCFKKCGGCCDDYTGHQELVIKTSHED) are Cytoplasmic-facing. The short motif at 1359–1363 (TSHED) is the KxHxx element.

The protein belongs to the betacoronaviruses spike protein family. Homotrimer; each monomer consists of a S1 and a S2 subunit. The resulting peplomers protrude from the virus surface as spikes. In terms of processing, specific enzymatic cleavages in vivo yield mature proteins. The precursor is processed into S1 and S2 by host cell furin or another cellular protease to yield the mature S1 and S2 proteins. Additionally, a second cleavage leads to the release of a fusion peptide after viral attachment to host cell receptor. Post-translationally, the cytoplasmic Cys-rich domain is palmitoylated. Spike glycoprotein is digested within host endosomes.

Its subcellular location is the virion membrane. The protein resides in the host endoplasmic reticulum-Golgi intermediate compartment membrane. The protein localises to the host cell membrane. Attaches the virion to the cell membrane by interacting with host receptor, initiating the infection. Its function is as follows. Mediates fusion of the virion and cellular membranes by acting as a class I viral fusion protein. Under the current model, the protein has at least three conformational states: pre-fusion native state, pre-hairpin intermediate state, and post-fusion hairpin state. During viral and target cell membrane fusion, the coiled coil regions (heptad repeats) assume a trimer-of-hairpins structure, positioning the fusion peptide in close proximity to the C-terminal region of the ectodomain. The formation of this structure appears to drive apposition and subsequent fusion of viral and target cell membranes. In terms of biological role, acts as a viral fusion peptide which is unmasked following S2 cleavage occurring upon virus endocytosis. In Bovine coronavirus (strain 98TXSF-110-LUN) (BCoV-LUN), this protein is Spike glycoprotein.